Consider the following 205-residue polypeptide: Small ribosomal subunit protein uS4 (205 aa).

The tract at residues 20 to 47 is disordered; that stretch reads WGRSKSPLNRGKENPPGQHGQRRKKPSD. The region spanning 94-154 is the S4 RNA-binding domain; it reads CRLDAVVYRL…TKSKDMALIL (61 aa).

Belongs to the universal ribosomal protein uS4 family. Part of the 30S ribosomal subunit. Contacts protein S5. The interaction surface between S4 and S5 is involved in control of translational fidelity.

In terms of biological role, one of the primary rRNA binding proteins, it binds directly to 16S rRNA where it nucleates assembly of the body of the 30S subunit. With S5 and S12 plays an important role in translational accuracy. This Paramagnetospirillum magneticum (strain ATCC 700264 / AMB-1) (Magnetospirillum magneticum) protein is Small ribosomal subunit protein uS4.